The primary structure comprises 619 residues: Dihydroxy-acid dehydratase (619 aa).

D81 contributes to the Mg(2+) binding site. Position 122 (C122) interacts with [2Fe-2S] cluster. Mg(2+) contacts are provided by D123 and K124. K124 carries the post-translational modification N6-carboxylysine. A [2Fe-2S] cluster-binding site is contributed by C195. A Mg(2+)-binding site is contributed by E494. The Proton acceptor role is filled by S520.

The protein belongs to the IlvD/Edd family. Homodimer. Requires [2Fe-2S] cluster as cofactor. Mg(2+) is required as a cofactor.

The enzyme catalyses (2R)-2,3-dihydroxy-3-methylbutanoate = 3-methyl-2-oxobutanoate + H2O. The catalysed reaction is (2R,3R)-2,3-dihydroxy-3-methylpentanoate = (S)-3-methyl-2-oxopentanoate + H2O. It functions in the pathway amino-acid biosynthesis; L-isoleucine biosynthesis; L-isoleucine from 2-oxobutanoate: step 3/4. Its pathway is amino-acid biosynthesis; L-valine biosynthesis; L-valine from pyruvate: step 3/4. In terms of biological role, functions in the biosynthesis of branched-chain amino acids. Catalyzes the dehydration of (2R,3R)-2,3-dihydroxy-3-methylpentanoate (2,3-dihydroxy-3-methylvalerate) into 2-oxo-3-methylpentanoate (2-oxo-3-methylvalerate) and of (2R)-2,3-dihydroxy-3-methylbutanoate (2,3-dihydroxyisovalerate) into 2-oxo-3-methylbutanoate (2-oxoisovalerate), the penultimate precursor to L-isoleucine and L-valine, respectively. This chain is Dihydroxy-acid dehydratase, found in Shewanella frigidimarina (strain NCIMB 400).